The primary structure comprises 437 residues: Dolichyl-diphosphooligosaccharide--protein glycosyltransferase 48 kDa subunit (437 aa).

A signal peptide spans 1–24 (MASLRVSVLLVAASCLLLGSGLRA). The Lumenal segment spans residues 25-407 (GPRTLVLLEN…QYERFIPSAY (383 aa)). A helical membrane pass occupies residues 408–428 (PYYASAFSVMFGLFIFSIVFL). The Cytoplasmic segment spans residues 429 to 437 (HMKEKEKSD).

Belongs to the DDOST 48 kDa subunit family. As to quaternary structure, component of the oligosaccharyltransferase (OST) complex.

It localises to the endoplasmic reticulum membrane. It functions in the pathway protein modification; protein glycosylation. In terms of biological role, subunit of the oligosaccharyl transferase (OST) complex that catalyzes the initial transfer of a defined glycan (Glc(3)Man(9)GlcNAc(2) in eukaryotes) from the lipid carrier dolichol-pyrophosphate to an asparagine residue within an Asn-X-Ser/Thr consensus motif in nascent polypeptide chains, the first step in protein N-glycosylation. N-glycosylation occurs cotranslationally and the complex associates with the Sec61 complex at the channel-forming translocon complex that mediates protein translocation across the endoplasmic reticulum (ER). All subunits are required for a maximal enzyme activity. Required for the assembly of both SST3A- and SS3B-containing OST complexes. This chain is Dolichyl-diphosphooligosaccharide--protein glycosyltransferase 48 kDa subunit, found in Xenopus tropicalis (Western clawed frog).